We begin with the raw amino-acid sequence, 351 residues long: Peptide chain release factor 1 (351 aa).

Residue Gln230 is modified to N5-methylglutamine.

Belongs to the prokaryotic/mitochondrial release factor family. Methylated by PrmC. Methylation increases the termination efficiency of RF1.

The protein localises to the cytoplasm. Peptide chain release factor 1 directs the termination of translation in response to the peptide chain termination codons UAG and UAA. This Onion yellows phytoplasma (strain OY-M) protein is Peptide chain release factor 1.